The sequence spans 251 residues: MEGGAAASTPAALPYYVAFSQLLGLTLVAMTGAWLGLYRGGIAWESDLQFNAHPLCMVIGLIFLQGDALLVYRVFRNEAKRTTKVLHGLLHIFALVIALVGLVAVFDYHRKEGYADLYSLHSWCGILVFVLYFVQWLVGFSFFLFPGASFSLRSRYRPQHIFFGATIFLLSVGTALLGLKEALLFKLRDKYSAFEPEGVLANVLGLLLACFGGAVLYILTRADWKRPSQAEEQALSMDFKTLTEGDSPGSQ.

Met-1 is modified (N-acetylmethionine). Residues 1–16 lie on the Cytoplasmic side of the membrane; sequence MEGGAAASTPAALPYY. The helical transmembrane segment at 17–37 threads the bilayer; that stretch reads VAFSQLLGLTLVAMTGAWLGL. A Cytochrome b561 domain is found at 19-220; the sequence is FSQLLGLTLV…FGGAVLYILT (202 aa). Residues 38-51 lie on the Vesicular side of the membrane; it reads YRGGIAWESDLQFN. A helical membrane pass occupies residues 52-72; sequence AHPLCMVIGLIFLQGDALLVY. Heme b is bound by residues His-53, Arg-73, and Lys-80. Residues 73–85 lie on the Cytoplasmic side of the membrane; the sequence is RVFRNEAKRTTKV. Residues Lys-80 and Lys-84 each coordinate L-ascorbate. A helical membrane pass occupies residues 86–106; sequence LHGLLHIFALVIALVGLVAVF. Heme b-binding positions include His-87, 116–119, and His-121; that span reads DLYS. Residues 107 to 124 lie on the Vesicular side of the membrane; the sequence is DYHRKEGYADLYSLHSWC. Residues 125–145 traverse the membrane as a helical segment; that stretch reads GILVFVLYFVQWLVGFSFFLF. The Cytoplasmic segment spans residues 146 to 158; that stretch reads PGASFSLRSRYRP. Arg-153 is a binding site for L-ascorbate. The helical transmembrane segment at 159–179 threads the bilayer; the sequence is QHIFFGATIFLLSVGTALLGL. Heme b-binding residues include His-160 and Glu-181. Topologically, residues 180–198 are vesicular; sequence KEALLFKLRDKYSAFEPEG. A helical membrane pass occupies residues 199–219; it reads VLANVLGLLLACFGGAVLYIL. Topologically, residues 220–251 are cytoplasmic; sequence TRADWKRPSQAEEQALSMDFKTLTEGDSPGSQ. Lys-225 lines the heme b pocket. Ser-247 is modified (phosphoserine).

The cofactor is heme b.

The protein resides in the cytoplasmic vesicle. It is found in the secretory vesicle. Its subcellular location is the chromaffin granule membrane. It carries out the reaction monodehydro-L-ascorbate radical(out) + L-ascorbate(in) = monodehydro-L-ascorbate radical(in) + L-ascorbate(out). Transmembrane reductase that uses ascorbate as an electron donor in the cytoplasm and transfers electrons across membranes to reduce monodehydro-L-ascorbate radical in the lumen of secretory vesicles. It is therefore involved the regeneration and homeostasis within secretory vesicles of ascorbate which in turn provides reducing equivalents needed to support the activity of intravesicular enzymes. The sequence is that of Transmembrane ascorbate-dependent reductase CYB561 (CYB561) from Pongo abelii (Sumatran orangutan).